Here is a 564-residue protein sequence, read N- to C-terminus: Rhotekin (564 aa).

Arginine 14 carries the omega-N-methylarginine modification. One can recognise an REM-1 domain in the interval 17-98 (ALEMEFKRGR…LQRRKEAQVL (82 aa)). A phosphoserine mark is found at serine 30 and serine 106. Position 230 is an asymmetric dimethylarginine (arginine 230). Serine 232 is modified (phosphoserine). One can recognise a PH domain in the interval 309 to 416 (QPTASGALRV…WMEALWQLFF (108 aa)). A disordered region spans residues 518–564 (TFSLDAAPADHSLGPSRSVAPLPPQRSPKSRGFYSKSQLGPWLQSPV). Residues serine 520, serine 529, and serine 544 each carry the phosphoserine modification.

As to quaternary structure, interacts via its C-terminal region with the TAX1BP3 PDZ domain. This interaction facilitates Rho-mediated activation of the c-Fos serum response element (SRE). Interacts with SEPT9. Specifically binds to GTP-bound RHOA, RHOB and RHOC and inhibits their GTPase activity. As to expression, abundantly expressed in brain and kidney. Weakly expressed in lung, testis, skeletal muscle, heart and thymus.

Mediates Rho signaling to activate NF-kappa-B and may confer increased resistance to apoptosis to cells in gastric tumorigenesis. May play a novel role in the organization of septin structures. The sequence is that of Rhotekin from Mus musculus (Mouse).